The chain runs to 182 residues: RNA chaperone ProQ (182 aa).

A disordered region spans residues 125 to 160 (EQRKEQRKDFFKKKAREERNAKTMNKAVKKGSPKKD).

This sequence belongs to the ProQ family.

Its subcellular location is the cytoplasm. Functionally, RNA chaperone with significant RNA binding, RNA strand exchange and RNA duplexing activities. In Haemophilus ducreyi (strain 35000HP / ATCC 700724), this protein is RNA chaperone ProQ.